The sequence spans 125 residues: Holo-[acyl-carrier-protein] synthase (125 aa).

Positions 8 and 56 each coordinate Mg(2+).

The protein belongs to the P-Pant transferase superfamily. AcpS family. The cofactor is Mg(2+).

The protein localises to the cytoplasm. The enzyme catalyses apo-[ACP] + CoA = holo-[ACP] + adenosine 3',5'-bisphosphate + H(+). Its function is as follows. Transfers the 4'-phosphopantetheine moiety from coenzyme A to a Ser of acyl-carrier-protein. The polypeptide is Holo-[acyl-carrier-protein] synthase (Borrelia turicatae (strain 91E135)).